A 286-amino-acid polypeptide reads, in one-letter code: Orotidine 5'-phosphate decarboxylase (286 aa).

Substrate-binding positions include Asp35, Lys57–His59, Asp89–Thr98, Tyr239, and Arg257. Lys91 (proton donor) is an active-site residue.

It belongs to the OMP decarboxylase family.

The enzyme catalyses orotidine 5'-phosphate + H(+) = UMP + CO2. The protein operates within pyrimidine metabolism; UMP biosynthesis via de novo pathway; UMP from orotate: step 2/2. The chain is Orotidine 5'-phosphate decarboxylase (URA3) from Yarrowia lipolytica (strain CLIB 122 / E 150) (Yeast).